The chain runs to 70 residues: Large ribosomal subunit protein uL29 (70 aa).

Belongs to the universal ribosomal protein uL29 family.

The sequence is that of Large ribosomal subunit protein uL29 from Rickettsia bellii (strain OSU 85-389).